A 279-amino-acid polypeptide reads, in one-letter code: Tryptophan 2,3-dioxygenase (279 aa).

Substrate is bound by residues 48-52 (FIIQH), tyrosine 110, and arginine 114. Histidine 237 contributes to the heme binding site. Threonine 251 is a binding site for substrate.

This sequence belongs to the tryptophan 2,3-dioxygenase family. Homotetramer. Heme is required as a cofactor.

It carries out the reaction L-tryptophan + O2 = N-formyl-L-kynurenine. It functions in the pathway amino-acid degradation; L-tryptophan degradation via kynurenine pathway; L-kynurenine from L-tryptophan: step 1/2. Functionally, heme-dependent dioxygenase that catalyzes the oxidative cleavage of the L-tryptophan (L-Trp) pyrrole ring and converts L-tryptophan to N-formyl-L-kynurenine. Catalyzes the oxidative cleavage of the indole moiety. The sequence is that of Tryptophan 2,3-dioxygenase from Ruegeria sp. (strain TM1040) (Silicibacter sp.).